Consider the following 801-residue polypeptide: Triacylglycerol lipase SDP1L (801 aa).

A glycan (N-linked (GlcNAc...) asparagine) is linked at Asn-130. 2 helical membrane-spanning segments follow: residues 232–249 (ALLL…LGVV) and 261–277 (IIAG…VVGT). The region spanning 233 to 436 (LLLSGGASLG…EMDLPMIQLK (204 aa)) is the PNPLA domain. Positions 264-268 (GSSVG) match the GXSXG motif. Ser-266 serves as the catalytic Nucleophile. N-linked (GlcNAc...) asparagine glycosylation is found at Asn-328 and Asn-332. Asp-423 (proton acceptor) is an active-site residue. N-linked (GlcNAc...) asparagine glycans are attached at residues Asn-605, Asn-620, Asn-649, Asn-653, Asn-708, and Asn-759. Positions 648–675 (SNRTSNLSHTYDAGSECDSPEAEDWTRS) are disordered. The tract at residues 750–801 (MNSEPEDSQNESEIPETPESVQLDSPEKDIIDGESSASEDGDAQANLIHDHE) is disordered. The span at 753-765 (EPEDSQNESEIPE) shows a compositional bias: acidic residues.

As to expression, highly expressed in mature pollen.

The protein localises to the lipid droplet. Its subcellular location is the membrane. The catalysed reaction is a triacylglycerol + H2O = a diacylglycerol + a fatty acid + H(+). Its function is as follows. May be involved in the release of fatty acids from the oil body in germinating seedlings. Can hydrolyze triacylglycerols in vitro. The chain is Triacylglycerol lipase SDP1L from Arabidopsis thaliana (Mouse-ear cress).